Reading from the N-terminus, the 216-residue chain is ATP-dependent Clp protease proteolytic subunit (216 aa).

Catalysis depends on serine 109, which acts as the Nucleophile. Histidine 134 is a catalytic residue.

It belongs to the peptidase S14 family. In terms of assembly, fourteen ClpP subunits assemble into 2 heptameric rings which stack back to back to give a disk-like structure with a central cavity, resembling the structure of eukaryotic proteasomes.

The protein resides in the cytoplasm. The enzyme catalyses Hydrolysis of proteins to small peptides in the presence of ATP and magnesium. alpha-casein is the usual test substrate. In the absence of ATP, only oligopeptides shorter than five residues are hydrolyzed (such as succinyl-Leu-Tyr-|-NHMec, and Leu-Tyr-Leu-|-Tyr-Trp, in which cleavage of the -Tyr-|-Leu- and -Tyr-|-Trp bonds also occurs).. Functionally, cleaves peptides in various proteins in a process that requires ATP hydrolysis. Has a chymotrypsin-like activity. Plays a major role in the degradation of misfolded proteins. This chain is ATP-dependent Clp protease proteolytic subunit, found in Rhodospirillum rubrum (strain ATCC 11170 / ATH 1.1.1 / DSM 467 / LMG 4362 / NCIMB 8255 / S1).